A 591-amino-acid polypeptide reads, in one-letter code: Potassium channel KAT4 (591 aa).

Residues 1 to 32 (MAARSELLRPAFGEASPSLGRFVINPHSCSYR) lie on the Cytoplasmic side of the membrane. A helical transmembrane segment spans residues 33-53 (WWHMFLIMLVLYSAWASPFEL). Topologically, residues 54-63 (SMEKAASIAL) are extracellular. A helical membrane pass occupies residues 64 to 84 (VVTDLVVDVFFAIDIALSFFV). Residues 85–109 (AYRDTSTGLLITDRRKITMRYLKRP) are Cytoplasmic-facing. A helical membrane pass occupies residues 110-130 (CFALDVASTIPLQIIYQLVTG). Topologically, residues 131–137 (KRQGLWG) are extracellular. A helical; Voltage-sensor membrane pass occupies residues 138–158 (LLNLLRLWRLRRVSKLFARVE). Residues 159 to 172 (KDIRFNYLWTRLIK) are Cytoplasmic-facing. The chain crosses the membrane as a helical span at residues 173–193 (LLCVTLFALHFAACIYLWMAF). The Extracellular segment spans residues 194-220 (NYKIKELTWIGSQIHSFEDRSVWFCYT). An intramembrane region (pore-forming) is located at residues 221 to 240 (CAVYWSITTLATVGYGDLHA). Residues 241 to 246 (TNIGEM) lie on the Extracellular side of the membrane. The chain crosses the membrane as a helical span at residues 247–267 (LFSIAFMLFNMGLTSYIIGNI). At 268–591 (TNLVVRETSN…IRDGDHLLFS (324 aa)) the chain is on the cytoplasmic side. 349–469 (LFQGVSDSLI…YIVFSNFIQY (121 aa)) is a binding site for a nucleoside 3',5'-cyclic phosphate. In terms of domain architecture, KHA spans 521-591 (RVVIHEQLPN…IRDGDHLLFS (71 aa)).

This sequence belongs to the potassium channel family. Plant (TC 1.A.1.4) subfamily.

It localises to the membrane. Probable inward-rectifying potassium channel. Assuming opened or closed conformations in response to the voltage difference across the membrane, the channel is activated by hyperpolarization. This is Potassium channel KAT4 from Oryza sativa subsp. japonica (Rice).